The following is a 443-amino-acid chain: ATP-dependent protease ATPase subunit HslU (443 aa).

ATP contacts are provided by residues I19, 61–66, D256, E321, and R393; that span reads GVGKTE.

Belongs to the ClpX chaperone family. HslU subfamily. In terms of assembly, a double ring-shaped homohexamer of HslV is capped on each side by a ring-shaped HslU homohexamer. The assembly of the HslU/HslV complex is dependent on binding of ATP.

It is found in the cytoplasm. ATPase subunit of a proteasome-like degradation complex; this subunit has chaperone activity. The binding of ATP and its subsequent hydrolysis by HslU are essential for unfolding of protein substrates subsequently hydrolyzed by HslV. HslU recognizes the N-terminal part of its protein substrates and unfolds these before they are guided to HslV for hydrolysis. The polypeptide is ATP-dependent protease ATPase subunit HslU (Cupriavidus pinatubonensis (strain JMP 134 / LMG 1197) (Cupriavidus necator (strain JMP 134))).